A 371-amino-acid chain; its full sequence is Opsin Rh1 (371 aa).

The Extracellular portion of the chain corresponds to methionine 1–tryptophan 47. Asparagine 18 is a glycosylation site (N-linked (GlcNAc...) asparagine). A helical transmembrane segment spans residues alanine 48 to isoleucine 72. Residues phenylalanine 73–asparagine 84 are Cytoplasmic-facing. A helical membrane pass occupies residues leucine 85–phenylalanine 110. Residues tyrosine 111–tyrosine 124 lie on the Extracellular side of the membrane. Cysteine 121 and cysteine 198 are oxidised to a cystine. Residues glycine 125–leucine 144 traverse the membrane as a helical segment. The Cytoplasmic portion of the chain corresponds to aspartate 145–leucine 163. A helical transmembrane segment spans residues alanine 164–serine 187. Over arginine 188 to serine 211 the chain is Extracellular. The chain crosses the membrane as a helical span at residues tyrosine 212 to valine 239. Over serine 240 to lysine 274 the chain is Cytoplasmic. A helical transmembrane segment spans residues valine 275 to leucine 298. Residues phenylalanine 299–threonine 305 lie on the Extracellular side of the membrane. Residues proline 306–serine 330 form a helical membrane-spanning segment. Lysine 317 is modified (N6-(retinylidene)lysine). The Cytoplasmic segment spans residues histidine 331–alanine 371.

This sequence belongs to the G-protein coupled receptor 1 family. Opsin subfamily. Post-translationally, phosphorylated on some or all of the serine and threonine residues present in the C-terminal region.

Its subcellular location is the cell projection. The protein localises to the rhabdomere membrane. Its function is as follows. Visual pigments are the light-absorbing molecules that mediate vision. They consist of an apoprotein, opsin, covalently linked to cis-retinal. The chain is Opsin Rh1 (NINAE) from Calliphora vicina (Blue blowfly).